The sequence spans 426 residues: Serine--tRNA ligase (426 aa).

229 to 231 (TAE) lines the L-serine pocket. 260-262 (RSE) serves as a coordination point for ATP. An L-serine-binding site is contributed by Glu283. An ATP-binding site is contributed by 347–350 (EIAS). An L-serine-binding site is contributed by Ser383.

The protein belongs to the class-II aminoacyl-tRNA synthetase family. Type-1 seryl-tRNA synthetase subfamily. In terms of assembly, homodimer. The tRNA molecule binds across the dimer.

The protein resides in the cytoplasm. The enzyme catalyses tRNA(Ser) + L-serine + ATP = L-seryl-tRNA(Ser) + AMP + diphosphate + H(+). The catalysed reaction is tRNA(Sec) + L-serine + ATP = L-seryl-tRNA(Sec) + AMP + diphosphate + H(+). It functions in the pathway aminoacyl-tRNA biosynthesis; selenocysteinyl-tRNA(Sec) biosynthesis; L-seryl-tRNA(Sec) from L-serine and tRNA(Sec): step 1/1. Its function is as follows. Catalyzes the attachment of serine to tRNA(Ser). Is also able to aminoacylate tRNA(Sec) with serine, to form the misacylated tRNA L-seryl-tRNA(Sec), which will be further converted into selenocysteinyl-tRNA(Sec). This is Serine--tRNA ligase from Rickettsia bellii (strain OSU 85-389).